The sequence spans 667 residues: Kelch repeat-containing protein DDB_G0274267 (667 aa).

A coiled-coil region spans residues 58 to 98 (TDRKIELLQQLGEELEAHKQQIESNRDKSMMLIEQLNKKMN). Positions 248 to 281 (SNNNDDTDDYDNNNNNNNDNKDDFDNCENNNNGD) are disordered. 6 Kelch repeats span residues 319–366 (CIYS…NFDG), 369–412 (HIYL…NGAN), 434–480 (NIYL…IYKE), 484–531 (SIYL…YDDQ), 534–582 (YIYV…SGGG), and 607–654 (IVHI…QFKN).

The polypeptide is Kelch repeat-containing protein DDB_G0274267 (Dictyostelium discoideum (Social amoeba)).